Reading from the N-terminus, the 548-residue chain is Biotin-dependent acetyl-/propionyl-coenzyme A carboxylase beta5 subunit (548 aa).

Residues Met-1 to His-23 form a disordered region. Basic and acidic residues predominate over residues Arg-7–Asp-21. The CoA carboxyltransferase N-terminal domain occupies Thr-25–Gln-281. Residues Asp-295–Lys-541 form the CoA carboxyltransferase C-terminal domain.

This sequence belongs to the AccD/PCCB family. In terms of assembly, forms homohexamers. The biotin-dependent acyl-CoA carboxylase complex is composed of AccA3, which contains the biotin carboxylase (BC) and biotin carboxyl carrier protein (BCCP) domains, and AccD5, which contains the carboxyl transferase (CT) domain. The AccA3/AccD5 complex forms a dodecamer, and can associate with the epsilon subunit AccE5 (Rv3280), which stimulates carboxylation by the complex. Is also part of the long-chain acyl-CoA carboxylase (LCC) complex, which is composed of AccA3, AccD4, AccD5 and AccE5. The four subunits are essential for activity, but AccD5, together with AccE5, probably plays a structural role rather than a catalytic one.

The catalysed reaction is N(6)-carboxybiotinyl-L-lysyl-[protein] + acetyl-CoA = N(6)-biotinyl-L-lysyl-[protein] + malonyl-CoA. It carries out the reaction N(6)-carboxybiotinyl-L-lysyl-[protein] + propanoyl-CoA = methylmalonyl-CoA + N(6)-biotinyl-L-lysyl-[protein]. It functions in the pathway lipid metabolism; mycolic acid biosynthesis. Carboxylase activity of the AccA3/AccD5 complex is stimulated by interaction with AccE5. In terms of biological role, component of a biotin-dependent acyl-CoA carboxylase complex. This subunit transfers the CO2 from carboxybiotin to the CoA ester substrate. When associated with the alpha3 subunit AccA3, is involved in the carboxylation of acetyl-CoA and propionyl-CoA, with a preference for propionyl-CoA. Is also required for the activity of the long-chain acyl-CoA carboxylase (LCC) complex. The polypeptide is Biotin-dependent acetyl-/propionyl-coenzyme A carboxylase beta5 subunit (Mycobacterium tuberculosis (strain ATCC 25618 / H37Rv)).